Reading from the N-terminus, the 59-residue chain is MAVQQNKKSPSKRGMHRSHDFLTTSPLAVEPSTGEVHLRHHISPNGYYRGKKVVKTKND.

Residues 1-59 form a disordered region; that stretch reads MAVQQNKKSPSKRGMHRSHDFLTTSPLAVEPSTGEVHLRHHISPNGYYRGKKVVKTKND. The segment covering 49 to 59 has biased composition (basic residues); sequence RGKKVVKTKND.

This sequence belongs to the bacterial ribosomal protein bL32 family.

The protein is Large ribosomal subunit protein bL32 of Burkholderia mallei (strain NCTC 10247).